We begin with the raw amino-acid sequence, 376 residues long: Multiphosphoryl transfer protein (376 aa).

Residues 2–142 (FQLSVQDIHP…EELRALLMGE (141 aa)) form the PTS EIIA type-2 domain. H62 serves as the catalytic Tele-phosphohistidine intermediate; for EIIA activity. H62 is modified (phosphohistidine; by HPr). The segment at 156–284 (TLDIVASDLL…LTSDDAPTDD (129 aa)) is m domain. In terms of domain architecture, HPr spans 285 to 375 (VLSAEFVVRN…DAIAAGLGEG (91 aa)). The active-site Pros-phosphohistidine intermediate; for HPr activity is the H299. H299 is modified (phosphohistidine; by EI).

It localises to the cytoplasm. Functionally, the phosphoenolpyruvate-dependent sugar phosphotransferase system (sugar PTS), a major carbohydrate active transport system, catalyzes the phosphorylation of incoming sugar substrates concomitantly with their translocation across the cell membrane. The enzyme II FruAB PTS system is involved in fructose transport. In Escherichia coli O157:H7, this protein is Multiphosphoryl transfer protein.